The sequence spans 961 residues: Cytochrome b5-like reductase apf12 (961 aa).

Residue A298 participates in FAD binding. The region spanning 429 to 548 is the FAD-binding FR-type domain; that stretch reads ARPQVDAFAW…IKPAPHFRIA (120 aa). Residues 453–456, 499–500, and G753 contribute to the NADP(+) site; these read SRIQ and SK. A Cytochrome b5 heme-binding domain is found at 716–793; that stretch reads LNQITKLELA…LNEMVIGRLD (78 aa). Residue 753 to 755 participates in FAD binding; that stretch reads GGE.

It belongs to the flavoprotein pyridine nucleotide cytochrome reductase family. FAD serves as cofactor.

Its pathway is secondary metabolite biosynthesis. In terms of biological role, cytochrome b5-like reductase; part of the gene cluster that mediates the biosynthesis of the cyclic tetrapeptide apicidin F (APF). The non-ribosomal peptide synthetase apf1 incorporates four different amino acids to produce apicidin F: L-phenylalanine, D-pipecolic acid (D-pip), N-methoxy-L-tryptophan and L-2-aminooctanedioic acid. L-Phenylalanine is the only proteinogenic amino acid directly used by apf1. The 3 other apf1 substrates are non-proteinogenic and have to be modified by other enzymes of the cluster. Lysine is converted to delta-1-pyrroline-5-carboxylate (P5C) which is reduced to L-pipecolic acid (L-pip) by apf3. L-pip is epimerized to D-pip, probably by apf1 activity, prior to incorporation. L-Tryptophan is N-oxidyzed by one of the cytochrome P450 monooxygenases (apf7 or apf8), and further methylated at the hydroxy group by the O-methyltransferase apf6 to yield N-methoxy-L-tryptophan. The synthesis of the fourth apf1 substrate is more complex. The fatty acid synthase apf5 is involved in the synthesis of the octanoic acid backbone of L-2-aminooctanedioic acid by fixing one acetyl-CoA unit and three malonyl-CoA units. Then one of the cytochrome P450 monooxygenases (apf7 or apf8) may oxidize this backbone to 2-oxooctanoic acid. The aminotransferase apf4 is predicted to catalyze the exchange of the keto group with an amino group. The next step would be the oxidation of 2-aminooctanoic acid by one of the cytochrome P450 monooxygenases (apf7 or apf8). The last step is the oxidation of 2-amino-8-hydroxyoctanoic acid to 2-aminooctanedioic acid is catalyzed by the FAD-dependent monooxygenase apf9. The protein is Cytochrome b5-like reductase apf12 of Gibberella fujikuroi (strain CBS 195.34 / IMI 58289 / NRRL A-6831) (Bakanae and foot rot disease fungus).